Consider the following 262-residue polypeptide: Hydroxyethylthiazole kinase (262 aa).

A substrate-binding site is contributed by Met-50. Positions 125 and 171 each coordinate ATP. Residue Gly-198 coordinates substrate.

Belongs to the Thz kinase family. Mg(2+) is required as a cofactor.

The catalysed reaction is 5-(2-hydroxyethyl)-4-methylthiazole + ATP = 4-methyl-5-(2-phosphooxyethyl)-thiazole + ADP + H(+). The protein operates within cofactor biosynthesis; thiamine diphosphate biosynthesis; 4-methyl-5-(2-phosphoethyl)-thiazole from 5-(2-hydroxyethyl)-4-methylthiazole: step 1/1. Catalyzes the phosphorylation of the hydroxyl group of 4-methyl-5-beta-hydroxyethylthiazole (THZ). The protein is Hydroxyethylthiazole kinase of Escherichia coli (strain K12 / MC4100 / BW2952).